A 215-amino-acid chain; its full sequence is Pyridoxine/pyridoxamine 5'-phosphate oxidase (215 aa).

Residues 9–12 (RRDY) and K69 each bind substrate. FMN-binding positions include 64–69 (RILLLK), 79–80 (FT), K86, and Q108. Residues Y126, R130, and S134 each contribute to the substrate site. FMN contacts are provided by residues 143-144 (QS) and W188. Residue 194–196 (RLH) participates in substrate binding. R198 is an FMN binding site.

This sequence belongs to the pyridoxamine 5'-phosphate oxidase family. As to quaternary structure, homodimer. It depends on FMN as a cofactor.

The catalysed reaction is pyridoxamine 5'-phosphate + O2 + H2O = pyridoxal 5'-phosphate + H2O2 + NH4(+). It catalyses the reaction pyridoxine 5'-phosphate + O2 = pyridoxal 5'-phosphate + H2O2. It participates in cofactor metabolism; pyridoxal 5'-phosphate salvage; pyridoxal 5'-phosphate from pyridoxamine 5'-phosphate: step 1/1. Its pathway is cofactor metabolism; pyridoxal 5'-phosphate salvage; pyridoxal 5'-phosphate from pyridoxine 5'-phosphate: step 1/1. Its function is as follows. Catalyzes the oxidation of either pyridoxine 5'-phosphate (PNP) or pyridoxamine 5'-phosphate (PMP) into pyridoxal 5'-phosphate (PLP). In Pseudomonas fluorescens (strain ATCC BAA-477 / NRRL B-23932 / Pf-5), this protein is Pyridoxine/pyridoxamine 5'-phosphate oxidase.